We begin with the raw amino-acid sequence, 616 residues long: Probable Xaa-Pro aminopeptidase P (616 aa).

Mn(2+) contacts are provided by D413, D424, E522, and E536.

It belongs to the peptidase M24B family. The cofactor is Mn(2+).

It catalyses the reaction Release of any N-terminal amino acid, including proline, that is linked to proline, even from a dipeptide or tripeptide.. Functionally, catalyzes the removal of a penultimate prolyl residue from the N-termini of peptides. This Paracoccidioides brasiliensis (strain Pb03) protein is Probable Xaa-Pro aminopeptidase P (AMPP).